We begin with the raw amino-acid sequence, 370 residues long: MKFARSGAAVSLLAAGTLVLTACGGGTNSSSSGAGGTSGSVHCGGKKELHSSGSTAQENAMEQFVYAYVRSCPGYTLDYNANGSGAGVTQFLNNETDFAGSDVPLNPSTGQPDRAAERCGSPAWDLPTVFGPIAITYNIKGVSTLNLDGPTTAKIFNGTITVWNDPQIQALNSGTDLPPTPISVIFRSDKSGTSDNFQKYLDGASNGAWGKGASETFNGGVGVGASGNNGTSALLQTTDGSITYNEWSFAVGKQLNMAQIITSAGPDPVAITTESVGKTIAGAKIMGQGNDLVLDTSSFYRPTQPGSYPIVLATYEIVCSKYPDATTGTAVRAFMQAAIGPGQEGLDQYGSIPLPKSFQAKLAAAVNAIS.

The signal sequence occupies residues 1 to 22 (MKFARSGAAVSLLAAGTLVLTA). The N-palmitoyl cysteine moiety is linked to residue Cys23. A lipid anchor (S-diacylglycerol cysteine) is attached at Cys23. Phosphate contacts are provided by residues 54 to 56 (STA), Ser84, Asp102, and 191 to 193 (SGT).

Belongs to the PstS family. The complex is composed of two ATP-binding proteins (PstB), two transmembrane proteins (PstC and PstA) and a solute-binding protein (PstS).

Its subcellular location is the cell membrane. It is found in the secreted. In terms of biological role, functions in inorganic phosphate uptake, a phosphate-binding protein, although probably not the main uptake protein under phosphate starvation. Part of the ABC transporter complex PstSACB involved in phosphate import. The chain is Phosphate-binding protein PstS2 (pstS2) from Mycobacterium bovis (strain BCG / Pasteur 1173P2).